The sequence spans 847 residues: E4 SUMO-protein ligase PIAL1 (847 aa).

Residues Val113–Asp271 are interacting domain (IND), required for interaction with MOM1 and PIAL2. An SP-RING-type zinc finger spans residues Ser268–Arg349. Zn(2+)-binding residues include Cys299, His301, Cys322, and Cys325. Repeat copies occupy residues Gln569–Asp591, Gln592–Asn614, Gln615–Asp637, His638–Asp659, Gln660–His682, Gln683–Asp705, and Gln706–Asp728. The tract at residues Gln569–Asp728 is 7 X 23 AA approximate tandem repeats.

This sequence belongs to the PIAL protein ligase family. Homodimer. Interacts with MOM1 and PIAL2 to form a high molecular mass complex which mediates transcriptional gene silencing at heterochromatin regions. As to expression, expressed in leaves, stems and flowers, and, at low levels, in siliques and old leaves.

It localises to the nucleus. The protein operates within protein modification; protein sumoylation. Together with MOM1 and PIAL2, regulates transcriptional gene silencing (TGS) independently of changes in DNA methylation. E4-type SUMO ligase that promotes SUMO chain formation in a SCE1-dependent manner and thus contributes to a pathway for proteolytic removal of sumoylation substrates. Involved in stress responses (e.g. osmotic, salt and abscisic acid ABA) and sulfur metabolism. The protein is E4 SUMO-protein ligase PIAL1 of Arabidopsis thaliana (Mouse-ear cress).